Consider the following 281-residue polypeptide: GDT1-like protein 4 (281 aa).

The N-terminal stretch at 1-22 (MARRVSTTRLLLLLLLVAAAAA) is a signal peptide. Helical transmembrane passes span 66–86 (AGLG…VSEI), 105–125 (TVLS…TGLG), 137–157 (TNSA…YIAW), 188–208 (IFSR…FLAE), 226–246 (AVGV…FAVV), and 258–278 (GTVA…SYFY).

This sequence belongs to the GDT1 family.

It is found in the membrane. In Oryza sativa subsp. indica (Rice), this protein is GDT1-like protein 4.